A 181-amino-acid chain; its full sequence is MNPRRKSRLKVVVLIMFSVAVAAGLTLYALSQNIDLFYTPSEIVKGKNNDPQLKPAVGQRIRVGGMVVEGSVKRDDKTLKVEFNLNDIGPAITVEYEGILPDLFREGQGIVAQGVLVEPTRLKASEVLAKHDENYMPPELGDKMKQQHNAVGVAEGDLKGESIRDKAELDRTFNTLQGESK.

The Cytoplasmic portion of the chain corresponds to 1-8 (MNPRRKSR). The helical; Signal-anchor for type II membrane protein transmembrane segment at 9–29 (LKVVVLIMFSVAVAAGLTLYA) threads the bilayer. The Periplasmic segment spans residues 30-181 (LSQNIDLFYT…TFNTLQGESK (152 aa)). Residues His-131 and Tyr-135 each coordinate heme.

It belongs to the CcmE/CycJ family.

Its subcellular location is the cell inner membrane. Its function is as follows. Heme chaperone required for the biogenesis of c-type cytochromes. Transiently binds heme delivered by CcmC and transfers the heme to apo-cytochromes in a process facilitated by CcmF and CcmH. The protein is Cytochrome c-type biogenesis protein CcmE of Haemophilus ducreyi (strain 35000HP / ATCC 700724).